A 316-amino-acid polypeptide reads, in one-letter code: MKKLNIIFAGTPDFAATHLQALLNSEHNVIAVYTQPDKPAGRGKKLQASPVKQLAEVHHIPVYQPKSLRKEEAQAELQALNADVMVVVAYGLILPEAVLKAPKYGCLNVHGSLLPRWRGAAPIQRSIWAGDTETGVTIMQMDIGLDTGDMLHKVTTPILATETSASLYAKLAELAPPALLEVLNGLTSGQFKPEKQQDEQANYAEKLTKEEAKLDWNMTACQLERNIRAFNPAPMAYLTLMVNEVEERIKVYQAEVLPHQEKTVGTVLAVDKNGIQIATQQGVLNITQLQPAGKKPMSVQDFLNGRGDWFKVGSVL.

Residue 112-115 (SLLP) participates in (6S)-5,6,7,8-tetrahydrofolate binding.

It belongs to the Fmt family.

The catalysed reaction is L-methionyl-tRNA(fMet) + (6R)-10-formyltetrahydrofolate = N-formyl-L-methionyl-tRNA(fMet) + (6S)-5,6,7,8-tetrahydrofolate + H(+). Its function is as follows. Attaches a formyl group to the free amino group of methionyl-tRNA(fMet). The formyl group appears to play a dual role in the initiator identity of N-formylmethionyl-tRNA by promoting its recognition by IF2 and preventing the misappropriation of this tRNA by the elongation apparatus. This is Methionyl-tRNA formyltransferase from Glaesserella parasuis serovar 5 (strain SH0165) (Haemophilus parasuis).